Consider the following 426-residue polypeptide: Histidine--tRNA ligase (426 aa).

Belongs to the class-II aminoacyl-tRNA synthetase family. In terms of assembly, homodimer.

The protein localises to the cytoplasm. It catalyses the reaction tRNA(His) + L-histidine + ATP = L-histidyl-tRNA(His) + AMP + diphosphate + H(+). The sequence is that of Histidine--tRNA ligase from Streptococcus gordonii (strain Challis / ATCC 35105 / BCRC 15272 / CH1 / DL1 / V288).